Reading from the N-terminus, the 501-residue chain is NAD(P)H-quinone oxidoreductase subunit 2, chloroplastic (501 aa).

14 consecutive transmembrane segments (helical) span residues 15–35 (ILPE…DLTF), 40–60 (TIWL…ILLF), 82–102 (IFQS…IEYI), 107–127 (MAIP…MFLC), 132–152 (LVTI…LCGY), 167–187 (LLIG…LYGL), 212–232 (TFIA…LVPF), 244–264 (PTPV…ALAT), 278–298 (WKIF…LVAI), 307–327 (LAYS…TGDL), 333–353 (MTIY…CIIL), 378–398 (FSLT…GFFG), 410–430 (GFYL…YYYL), and 466–486 (FVMI…NPIF).

The protein belongs to the complex I subunit 2 family. NDH is composed of at least 16 different subunits, 5 of which are encoded in the nucleus.

It is found in the plastid. It localises to the chloroplast thylakoid membrane. The catalysed reaction is a plastoquinone + NADH + (n+1) H(+)(in) = a plastoquinol + NAD(+) + n H(+)(out). It catalyses the reaction a plastoquinone + NADPH + (n+1) H(+)(in) = a plastoquinol + NADP(+) + n H(+)(out). In terms of biological role, NDH shuttles electrons from NAD(P)H:plastoquinone, via FMN and iron-sulfur (Fe-S) centers, to quinones in the photosynthetic chain and possibly in a chloroplast respiratory chain. The immediate electron acceptor for the enzyme in this species is believed to be plastoquinone. Couples the redox reaction to proton translocation, and thus conserves the redox energy in a proton gradient. This Marchantia polymorpha (Common liverwort) protein is NAD(P)H-quinone oxidoreductase subunit 2, chloroplastic.